The primary structure comprises 85 residues: ATP synthase subunit c (85 aa).

2 helical membrane-spanning segments follow: residues 10-30 and 53-73; these read IAVA…FGLL and FIVA…ALFF.

This sequence belongs to the ATPase C chain family. As to quaternary structure, F-type ATPases have 2 components, F(1) - the catalytic core - and F(0) - the membrane proton channel. F(1) has five subunits: alpha(3), beta(3), gamma(1), delta(1), epsilon(1). F(0) has three main subunits: a(1), b(2) and c(10-14). The alpha and beta chains form an alternating ring which encloses part of the gamma chain. F(1) is attached to F(0) by a central stalk formed by the gamma and epsilon chains, while a peripheral stalk is formed by the delta and b chains.

The protein localises to the cell inner membrane. Its function is as follows. F(1)F(0) ATP synthase produces ATP from ADP in the presence of a proton or sodium gradient. F-type ATPases consist of two structural domains, F(1) containing the extramembraneous catalytic core and F(0) containing the membrane proton channel, linked together by a central stalk and a peripheral stalk. During catalysis, ATP synthesis in the catalytic domain of F(1) is coupled via a rotary mechanism of the central stalk subunits to proton translocation. Functionally, key component of the F(0) channel; it plays a direct role in translocation across the membrane. A homomeric c-ring of between 10-14 subunits forms the central stalk rotor element with the F(1) delta and epsilon subunits. The chain is ATP synthase subunit c from Pseudomonas aeruginosa (strain LESB58).